The sequence spans 259 residues: Ras-related protein Rab-34 (259 aa).

At M1 the chain carries N-acetylmethionine. Residues S62, V63, G64, K65, T66, D78, Y81, and T84 each coordinate GTP. T66 contacts Mg(2+). The Switch 1 motif lies at 71-89; sequence RFCKDTFDKNYKATIGVDF. Residues T84 and D107 each contribute to the Mg(2+) site. Positions 108–127 match the Switch 2 motif; the sequence is TAGQERFKCIASTYYRGAQA. The GTP site is built by G110, K167, D169, and S198. S241 is modified (phosphoserine). Residues C257 and C258 are each lipidated (S-geranylgeranyl cysteine).

Belongs to the small GTPase superfamily. Rab family. In terms of assembly, interacts with RILP. The GTP-bound form interacts with REP15. It depends on Mg(2+) as a cofactor.

It localises to the cytoplasm. Its subcellular location is the golgi apparatus. The protein localises to the cytoplasmic vesicle. It is found in the phagosome. The protein resides in the phagosome membrane. It localises to the cell projection. Its subcellular location is the cilium. The protein localises to the cytoskeleton. It is found in the microtubule organizing center. The protein resides in the centrosome. It localises to the centriole. The enzyme catalyses GTP + H2O = GDP + phosphate + H(+). With respect to regulation, regulated by guanine nucleotide exchange factors (GEFs) which promote the exchange of bound GDP for free GTP. Regulated by GTPase activating proteins (GAPs) which increase the GTP hydrolysis activity. Inhibited by GDP dissociation inhibitors (GDIs). The small GTPases Rab are key regulators of intracellular membrane trafficking, from the formation of transport vesicles to their fusion with membranes. Rabs cycle between an inactive GDP-bound form and an active GTP-bound form that is able to recruit to membranes different sets of downstream effectors directly responsible for vesicle formation, movement, tethering and fusion. RAB34 transports protein involved in the redistribution of lysosomes to the peri-Golgi region. Plays a role in the maturation of phagosomes that engulf pathogens, such as S.aureus and M.tuberculosis. Plays a role in the fusion of phagosomes with lysosomes. Involved in ciliogenesis. In particular, it is required for early steps of the intracellular cilium assembly pathway initiated by trafficking and docking of ciliary vesicles to the centrioles in the cytoplasm, followed by axoneme formation in the cytoplasm. After axoneme elongation, the centrioles migrate close to the cell surface so that ciliary vesicles can fuse with the plasma membrane to expose cilia to the extracellular space. It seems dispensable for ciliogenesis via the extracellular pathway where cilium assembly begins after migration and docking of the centriole to the plasma membrane. Also acts as a positive regulator of hedgehog signaling and regulates ciliary function. This is Ras-related protein Rab-34 from Rattus norvegicus (Rat).